Reading from the N-terminus, the 1881-residue chain is Nuclear pore membrane glycoprotein 210-like (1881 aa).

A signal peptide spans 1–32 (MIAFGAPRRRSFGLLFSLAPHLFFLFLIGTLA). Asn-80, Asn-344, and Asn-808 each carry an N-linked (GlcNAc...) asparagine glycan. The region spanning 1078 to 1150 (FPPFRLIPEK…TIQTVNEDTG (73 aa)) is the BIG2 domain. Asn-1441 carries an N-linked (GlcNAc...) asparagine glycan. Residues 1804-1824 (YQILLFTLFAVLASTSFIFLA) form a helical membrane-spanning segment.

Belongs to the NUP210 family. As to expression, expressed in testis.

The protein localises to the nucleus membrane. It localises to the nucleus. The protein resides in the nucleoplasm. This Mus musculus (Mouse) protein is Nuclear pore membrane glycoprotein 210-like (Nup210l).